Reading from the N-terminus, the 374-residue chain is Probable neutral protease 2 homolog ARB_00849 (374 aa).

Residues 1 to 19 (MKFLTALSAIGALVATATA) form the signal peptide. The propeptide occupies 20–189 (AAVPNTPAKQ…KKSRGTIDKR (170 aa)). 2 cysteine pairs are disulfide-bonded: C197-C268 and C275-C293. H318 contributes to the Zn(2+) binding site. Residue E319 is part of the active site. Zn(2+) contacts are provided by H322 and D333.

The protein belongs to the peptidase M35 family. It depends on Zn(2+) as a cofactor.

The protein localises to the secreted. The catalysed reaction is Preferential cleavage of bonds with hydrophobic residues in P1'. Also 3-Asn-|-Gln-4 and 8-Gly-|-Ser-9 bonds in insulin B chain.. Its function is as follows. Probable secreted metalloprotease that shows high activities on basic nuclear substrates such as histone and protamine. May be involved in virulence. This is Probable neutral protease 2 homolog ARB_00849 from Arthroderma benhamiae (strain ATCC MYA-4681 / CBS 112371) (Trichophyton mentagrophytes).